Here is a 78-residue protein sequence, read N- to C-terminus: Large ribosomal subunit protein bL28 (78 aa).

It belongs to the bacterial ribosomal protein bL28 family.

The sequence is that of Large ribosomal subunit protein bL28 from Marinobacter nauticus (strain ATCC 700491 / DSM 11845 / VT8) (Marinobacter aquaeolei).